Reading from the N-terminus, the 142-residue chain is Large ribosomal subunit protein bL17 (142 aa).

Belongs to the bacterial ribosomal protein bL17 family. As to quaternary structure, part of the 50S ribosomal subunit. Contacts protein L32.

This chain is Large ribosomal subunit protein bL17, found in Chlamydia caviae (strain ATCC VR-813 / DSM 19441 / 03DC25 / GPIC) (Chlamydophila caviae).